Here is a 322-residue protein sequence, read N- to C-terminus: Phosphatidylserine decarboxylase proenzyme (322 aa).

Active-site charge relay system; for autoendoproteolytic cleavage activity residues include D90, H147, and S254. Catalysis depends on S254, which acts as the Schiff-base intermediate with substrate; via pyruvic acid; for decarboxylase activity. The residue at position 254 (S254) is a Pyruvic acid (Ser); by autocatalysis. The disordered stretch occupies residues 293 to 322; it reads PDAEPAPLPAEEIEAEHDASPLVDDKKDQV. Residues 308–322 are compositionally biased toward basic and acidic residues; it reads EHDASPLVDDKKDQV.

The protein belongs to the phosphatidylserine decarboxylase family. PSD-B subfamily. Prokaryotic type I sub-subfamily. In terms of assembly, heterodimer of a large membrane-associated beta subunit and a small pyruvoyl-containing alpha subunit. Pyruvate is required as a cofactor. Post-translationally, is synthesized initially as an inactive proenzyme. Formation of the active enzyme involves a self-maturation process in which the active site pyruvoyl group is generated from an internal serine residue via an autocatalytic post-translational modification. Two non-identical subunits are generated from the proenzyme in this reaction, and the pyruvate is formed at the N-terminus of the alpha chain, which is derived from the carboxyl end of the proenzyme. The autoendoproteolytic cleavage occurs by a canonical serine protease mechanism, in which the side chain hydroxyl group of the serine supplies its oxygen atom to form the C-terminus of the beta chain, while the remainder of the serine residue undergoes an oxidative deamination to produce ammonia and the pyruvoyl prosthetic group on the alpha chain. During this reaction, the Ser that is part of the protease active site of the proenzyme becomes the pyruvoyl prosthetic group, which constitutes an essential element of the active site of the mature decarboxylase.

It is found in the cell membrane. It catalyses the reaction a 1,2-diacyl-sn-glycero-3-phospho-L-serine + H(+) = a 1,2-diacyl-sn-glycero-3-phosphoethanolamine + CO2. It participates in phospholipid metabolism; phosphatidylethanolamine biosynthesis; phosphatidylethanolamine from CDP-diacylglycerol: step 2/2. Its function is as follows. Catalyzes the formation of phosphatidylethanolamine (PtdEtn) from phosphatidylserine (PtdSer). This Escherichia coli O139:H28 (strain E24377A / ETEC) protein is Phosphatidylserine decarboxylase proenzyme.